The chain runs to 121 residues: Cysteine-rich neurotrophic factor (121 aa).

A signal peptide spans 1-18; that stretch reads MLLKLIVALSLTLTLASA. Residue Asn-57 is glycosylated (N-linked (GlcNAc...) asparagine).

It localises to the secreted. Functionally, interacts with the p75 low-affinity neurotrophin receptor. Evokes neurite outgrowth and modulated calcium currents in pedal motor neurons. May be involved in target-derived trophic support for motor neurons. The sequence is that of Cysteine-rich neurotrophic factor from Lymnaea stagnalis (Great pond snail).